The chain runs to 343 residues: Chlorophyll(ide) b reductase NOL, chloroplastic (343 aa).

Residues 1-54 (MAATAAYLPLRAQAQVGLAPLRPSGSAAAGARLPGRTARRRLAARGGPEAAGIR) constitute a chloroplast transit peptide. 78 to 102 (ITGSTKGIGYALAKEFLKAGDNVVI) provides a ligand contact to NAD(+). Tyr228 serves as the catalytic Proton acceptor.

It belongs to the short-chain dehydrogenases/reductases (SDR) family. Interacts with NCY1 to form a complex that acts as a chlorophyll b reductase. Expressed in leaves and stems. Also detected in non-photosynthetic tissues such as roots.

The protein localises to the plastid. The protein resides in the chloroplast thylakoid membrane. It catalyses the reaction 7(1)-hydroxychlorophyllide a + NAD(+) = chlorophyllide b + NADH + H(+). The catalysed reaction is 7(1)-hydroxychlorophyllide a + NADP(+) = chlorophyllide b + NADPH + H(+). Its function is as follows. Required for chlorophyll b degradation. The sequence is that of Chlorophyll(ide) b reductase NOL, chloroplastic (NOL) from Oryza sativa subsp. japonica (Rice).